The sequence spans 243 residues: UPF0246 protein SUB1767 (243 aa).

Belongs to the UPF0246 family.

The polypeptide is UPF0246 protein SUB1767 (Streptococcus uberis (strain ATCC BAA-854 / 0140J)).